Consider the following 1944-residue polypeptide: MSNFYEERTTMIAARDLQEFVPFGRDHCKHHPNALNLQLRQLQPASELWSSDGAAGLVGSLQEVTIHEKQKESWQLRKGVSEIGEDVDYDEELYVAGNMVIWSKGSKSQALAVYKAFTVDSPVQQALWCDFIISQDKSEKAYSSNEVEKCICILQSSCINMHSIEGKDYIASLPFQVANVWPTKYGLLFERSASSHEVPPGSPREPLPTMFSMLHPLDEITPLVCKSGSLFGSSRVQYVVDHAMKIVFLNTDPSIVMTYDAVQNVHSVWTLRRVKSEEENVVLKFSEQGGTPQNVATSSSLTAHLRSLSKGDSPVTSPFQNYSSIHSQSRSTSSPSLHSRSPSISNMAALSRAHSPALGVHSFSGVQRFNISSHNQSPKRHSISHSPNSNSNGSFLAPETEPIVPELCIDHLWTETITNIREKNSQASKVFITSDLCGQKFLCFLVESQLQLRCVKFQESNDKTQLIFGSVTNIPAKDAAPVEKIDTMLVLEGSGNLVLYTGVVRVGKVFIPGLPAPSLTMSNTMPRPSTPLDGVSTPKPLSKLLGSLDEVVLLSPVPELRDSSKLHDSLYNEDCTFQQLGTYIHSIRDPVHNRVTLELSNGSMVRITIPEIATSELVQTCLQAIKFILPKEIAVQMLVKWYNVHSAPGGPSYHSEWNLFVTCLMNMMGYNTDRLAWTRNFDFEGSLSPVIAPKKARPSETGSDDDWEYLLNSDYHQNVESHLLNRSLCLSPSEASQMKDEDFSQNLSLDSSTLLFTHIPAIFFVLHLVYEELKLNTLMGEGICSLVELLVQLARDLKLGPYVDHYYRDYPTLVRTTGQVCTIDPGQTGFMHHPSFFTSEPPSIYQWVSSCLKGEGMPPYPYLPGICERSRLVVLSIALYILGDESLVSDESSQYLTRITIAPQKLQVEQEENRFSFRHSTSVSSLAERLVVWMTNVGFTLRDLETLPFGIALPIRDAIYHCREQPASDWPEAVCLLIGRQDLSKQACEGNLPKGKSVLSSDVPSGTETEEEDDGMNDMNHEVMSLIWSEDLRVQDVRRLLQSAHPVRVNVVQYPELSDHEFIEEKENRLLQLCQRTMALPVGRGMFTLFSYHPVPTEPLPIPKLNLTGRAPPRNTTVDLNSGNIDVPPNMTSWASFHNGVAAGLKIAPASQIDSAWIVYNKPKHAELANEYAGFLMALGLNGHLTKLATLNIHDYLTKGHEMTSIGLLLGVSAAKLGTMDMSITRLLSIHIPALLPPTSTELDVPHNVQVAAVVGIGLVYQGTAHRHTAEVLLAEIGRPPGPEMEYCTDRESYSLAAGLALGMVCLGHGSNLIGMSDLNVPEQLYQYMVGGHRRFQTGMHREKHKSPSYQIKEGDTINVDVTCPGATLALAMIYLKTNNRSIADWLRAPDTMYLLDFVKPEFLLLRTLARCLILWDDILPNSKWVDSNVPQIIRENSISLSEIELPCSEDLNLETLSQAHVYIIAGACLSLGFRFAGSENLSAFNCLHKFAKDFMTYLSAPNASVTGPHNLETCLSVVLLSLAMVMAGSGNLKVLQLCRFLHMKTGGEMNYGFHLAHHMALGLLFLGGGRYSLSTSNSSIAALLCALYPHFPAHSTDNRYHLQALRHLYVLAAEPRLLVPVDVDTNTPCYALLEVTYKGTQWYEQTKEELMAPTLLPELHLLKQIKVKGPRYWELLIDLSKGTQHLKSILSKDGVLYVKLRAGQLSYKEDPMGWQSLLAQTVANRNSEARAFKPETISAFTSDPALLSFAEYFCKPTVNMGQKQEILDLFSSVLYECVTQETPEMLPAYIAMDQAIRRLGRREMSETSELWQIKLVLEFFSSRSHQERLQNHPKRGLFMNSEFLPVVKCTIDNTLDQWLQVGGDMCVHAYLSGQPLEESQLSMLACFLVYHSVPAPQHLPPIGLEGSTSFAELLFKFKQLKMPVRALLRLAPLLLGNPQPMVM.

Residues Ser51, Ser60, Ser202, and Ser286 each carry the phosphoserine modification. Phosphothreonine is present on Thr291. The interval 305-343 (LRSLSKGDSPVTSPFQNYSSIHSQSRSTSSPSLHSRSPS) is disordered. Ser313, Ser341, Ser343, Ser355, Ser362, Ser373, and Ser377 each carry phosphoserine. Residues 323–343 (SSIHSQSRSTSSPSLHSRSPS) are compositionally biased toward low complexity. The segment at 373-396 (SHNQSPKRHSISHSPNSNSNGSFL) is disordered. Positions 384–394 (SHSPNSNSNGS) are enriched in low complexity. Thr537 bears the Phosphothreonine mark. Residues Ser547 and Ser555 each carry the phosphoserine modification. Tyr571 bears the Phosphotyrosine mark. A phosphoserine mark is found at Ser686, Ser688, and Ser916. The segment at 994-1016 (KGKSVLSSDVPSGTETEEEDDGM) is disordered. Residues 998–1007 (VLSSDVPSGT) are compositionally biased toward polar residues. PC repeat units lie at residues 1297 to 1325 (AAGL…PEQL), 1366 to 1404 (GATL…PEFL), 1467 to 1501 (GACL…YLSA), and 1520 to 1552 (LLSL…EMNY).

The protein belongs to the APC1 family. The mammalian APC/C is composed at least of 14 distinct subunits ANAPC1, ANAPC2, CDC27/APC3, ANAPC4, ANAPC5, CDC16/APC6, ANAPC7, CDC23/APC8, ANAPC10, ANAPC11, CDC26/APC12, ANAPC13, ANAPC15 and ANAPC16 that assemble into a complex of at least 19 chains with a combined molecular mass of around 1.2 MDa; APC/C interacts with FZR1 and FBXO5. Post-translationally, phosphorylated. Phosphorylation on Ser-355 occurs specifically during mitosis.

Its pathway is protein modification; protein ubiquitination. Its function is as follows. Component of the anaphase promoting complex/cyclosome (APC/C), a cell cycle-regulated E3 ubiquitin ligase that controls progression through mitosis and the G1 phase of the cell cycle. The APC/C complex acts by mediating ubiquitination and subsequent degradation of target proteins: it mainly mediates the formation of 'Lys-11'-linked polyubiquitin chains and, to a lower extent, the formation of 'Lys-48'- and 'Lys-63'-linked polyubiquitin chains. The APC/C complex catalyzes assembly of branched 'Lys-11'-/'Lys-48'-linked branched ubiquitin chains on target proteins. The polypeptide is Anaphase-promoting complex subunit 1 (ANAPC1) (Homo sapiens (Human)).